We begin with the raw amino-acid sequence, 283 residues long: (+)-borneol dehydrogenase 2 (283 aa).

NAD(+) is bound by residues 27–33 (GGSSGIG), Asp51, 76–77 (DV), and 103–105 (NAG). Catalysis depends on Ser157, which acts as the Proton donor. Residues Tyr170, Lys174, and Thr205 each coordinate NAD(+). The active-site Proton acceptor is the Tyr170. The Proton donor/acceptor role is filled by Lys174.

It belongs to the short-chain dehydrogenases/reductases (SDR) family.

It carries out the reaction (1R,2S,4R)-borneol + NAD(+) = (1R,4R)-camphor + NADH + H(+). Involved in the biosynthesis of monoterpene natural products related to camphor. Catalayzes the oxidation of (+)-borneol to (+)-camphor. Shows absolute selectivity towards (+)-borneol. Catalyzes the oxidation of (+)-isoborneol to (-)-camphor. Shows absolute selectivity towards (+)-isoborneol. The protein is (+)-borneol dehydrogenase 2 of Salvia officinalis (Sage).